Here is a 303-residue protein sequence, read N- to C-terminus: Oxygen-dependent coproporphyrinogen-III oxidase (303 aa).

Position 93 (Ser93) interacts with substrate. Positions 97 and 107 each coordinate a divalent metal cation. His107 serves as the catalytic Proton donor. Substrate is bound at residue 109–111 (NVR). Positions 146 and 176 each coordinate a divalent metal cation. Positions 241–276 (YVEFNLVYDRGTLFGLQSGGRTESILMSLPPQVRWG) are important for dimerization. 259 to 261 (GGR) is a binding site for substrate.

Belongs to the aerobic coproporphyrinogen-III oxidase family. In terms of assembly, homodimer. The cofactor is a divalent metal cation.

The protein localises to the cytoplasm. The catalysed reaction is coproporphyrinogen III + O2 + 2 H(+) = protoporphyrinogen IX + 2 CO2 + 2 H2O. It participates in porphyrin-containing compound metabolism; protoporphyrin-IX biosynthesis; protoporphyrinogen-IX from coproporphyrinogen-III (O2 route): step 1/1. Its function is as follows. Involved in the heme biosynthesis. Catalyzes the aerobic oxidative decarboxylation of propionate groups of rings A and B of coproporphyrinogen-III to yield the vinyl groups in protoporphyrinogen-IX. The chain is Oxygen-dependent coproporphyrinogen-III oxidase from Pseudomonas entomophila (strain L48).